The sequence spans 354 residues: Anthranilate phosphoribosyltransferase (354 aa).

5-phospho-alpha-D-ribose 1-diphosphate contacts are provided by residues glycine 94, 97 to 98 (GD), threonine 102, 104 to 107 (NIST), 122 to 130 (KHGNRAASS), and serine 134. Residue glycine 94 participates in anthranilate binding. A Mg(2+)-binding site is contributed by serine 106. Asparagine 125 contributes to the anthranilate binding site. Arginine 180 is an anthranilate binding site. Mg(2+) contacts are provided by aspartate 238 and glutamate 239.

It belongs to the anthranilate phosphoribosyltransferase family. Homodimer. It depends on Mg(2+) as a cofactor.

It carries out the reaction N-(5-phospho-beta-D-ribosyl)anthranilate + diphosphate = 5-phospho-alpha-D-ribose 1-diphosphate + anthranilate. Its pathway is amino-acid biosynthesis; L-tryptophan biosynthesis; L-tryptophan from chorismate: step 2/5. Functionally, catalyzes the transfer of the phosphoribosyl group of 5-phosphorylribose-1-pyrophosphate (PRPP) to anthranilate to yield N-(5'-phosphoribosyl)-anthranilate (PRA). The polypeptide is Anthranilate phosphoribosyltransferase (Streptomyces griseus subsp. griseus (strain JCM 4626 / CBS 651.72 / NBRC 13350 / KCC S-0626 / ISP 5235)).